We begin with the raw amino-acid sequence, 395 residues long: Acetate kinase (395 aa).

N8 provides a ligand contact to Mg(2+). Residue K15 coordinates ATP. R94 provides a ligand contact to substrate. The active-site Proton donor/acceptor is D151. Residues 210–214, 284–286, and 329–333 each bind ATP; these read HLGNG, DMR, and GIGEN. Position 382 (E382) interacts with Mg(2+).

It belongs to the acetokinase family. In terms of assembly, homodimer. Mg(2+) serves as cofactor. It depends on Mn(2+) as a cofactor.

It localises to the cytoplasm. The catalysed reaction is acetate + ATP = acetyl phosphate + ADP. Its pathway is metabolic intermediate biosynthesis; acetyl-CoA biosynthesis; acetyl-CoA from acetate: step 1/2. In terms of biological role, catalyzes the formation of acetyl phosphate from acetate and ATP. Can also catalyze the reverse reaction. In Protochlamydia amoebophila (strain UWE25), this protein is Acetate kinase.